A 404-amino-acid polypeptide reads, in one-letter code: Deoxyguanosinetriphosphate triphosphohydrolase-like protein (404 aa).

The tract at residues 1–32 (MAVGMAAPHATYASDPARSRGRLFDEPPSKTR) is disordered. Residues 22 to 32 (RLFDEPPSKTR) show a composition bias toward basic and acidic residues. Residues 69-217 (RLTHTLEVAQ…AAIADDIAYD (149 aa)) form the HD domain.

Belongs to the dGTPase family. Type 2 subfamily.

The chain is Deoxyguanosinetriphosphate triphosphohydrolase-like protein from Nitrobacter hamburgensis (strain DSM 10229 / NCIMB 13809 / X14).